The sequence spans 380 residues: GTP-binding protein 10 (380 aa).

The Obg domain maps to 13–148; that stretch reads GNFVDNVRLY…RNIRLDLKLI (136 aa). One can recognise an OBG-type G domain in the interval 149 to 344; the sequence is ADFGLVGFPN…LKSLIRQSLE (196 aa). GTP-binding positions include 155 to 162, 202 to 206, and 278 to 281; these read GFPNAGKS, DLPGL, and NKMD.

This sequence belongs to the TRAFAC class OBG-HflX-like GTPase superfamily. OBG GTPase family.

The protein localises to the nucleus. Its subcellular location is the nucleolus. Its function is as follows. May be involved in the ribosome maturation process. The polypeptide is GTP-binding protein 10 (gtpbp10) (Danio rerio (Zebrafish)).